The chain runs to 1349 residues: Protein strawberry notch homolog 2 (1349 aa).

3 disordered regions span residues 170–212 (YQSH…QHPD), 609–633 (STRR…PKAS), and 1319–1349 (PTET…FPNS). Acidic residues predominate over residues 177-188 (EEEEGEEEEETE). Positions 609-631 (STRRRRDRGGGKRKRRPRGRGPK) are enriched in basic residues.

The protein belongs to the SBNO family. In terms of assembly, interacts with TAL1; this interaction inhibits TAL1 occupancy of the DCSTAMP promoter, leading to the activation of the DCSTAMP promoter by the transcription factor MITF. As to expression, expressed in the spleen and bone marrow, and to a lesser extent in the kidney, liver, brain, skin, heart and muscle. Expressed predominantly in osteoclasts, and to a lesser extent in T-cells, B-cells and osteoblasts. Expressed in macrophages.

Functionally, acts as a transcriptional coregulator, that can have both coactivator and corepressor functions. Inhibits the DCSTAMP-repressive activity of TAL1, hence enhancing the access of the transcription factor MITF to the DC-STAMP promoter in osteoclast. Plays a role in bone homeostasis; required as a positive regulator in TNFSF11//RANKL-mediated osteoclast fusion via a DCSTAMP-dependent pathway. May also be required in the regulation of osteoblast differentiation. Involved in the transcriptional corepression of NF-kappaB in macrophages. Plays a role as a regulator in the pro-inflammatory cascade. The sequence is that of Protein strawberry notch homolog 2 (Sbno2) from Mus musculus (Mouse).